The following is a 353-amino-acid chain: Photosystem II protein D1 (353 aa).

Position 2 is an N-acetylthreonine (Thr-2). Thr-2 bears the Phosphothreonine mark. 3 helical membrane passes run 29 to 46 (YIGWFGVLMIPTLLTATS), 118 to 133 (HFLLGVACYMGREWEL), and 142 to 156 (WIAVAYSAPVAAATA). His-118 is a chlorophyll a binding site. Residue Tyr-126 participates in pheophytin a binding. [CaMn4O5] cluster is bound by residues Asp-170 and Glu-189. Residues 197 to 218 (FHMLGVAGVFGGSLFSAMHGSL) form a helical membrane-spanning segment. A chlorophyll a-binding site is contributed by His-198. A quinone-binding positions include His-215 and 264-265 (SF). A Fe cation-binding site is contributed by His-215. Position 272 (His-272) interacts with Fe cation. A helical membrane pass occupies residues 274–288 (FLAAWPVVGIWFTAL). Residues His-332, Glu-333, Asp-342, and Ala-344 each contribute to the [CaMn4O5] cluster site. The propeptide occupies 345-353 (SVEAPSINA).

It belongs to the reaction center PufL/M/PsbA/D family. As to quaternary structure, PSII is composed of 1 copy each of membrane proteins PsbA, PsbB, PsbC, PsbD, PsbE, PsbF, PsbH, PsbI, PsbJ, PsbK, PsbL, PsbM, PsbT, PsbX, PsbY, PsbZ, Psb30/Ycf12, at least 3 peripheral proteins of the oxygen-evolving complex and a large number of cofactors. It forms dimeric complexes. The cofactor is The D1/D2 heterodimer binds P680, chlorophylls that are the primary electron donor of PSII, and subsequent electron acceptors. It shares a non-heme iron and each subunit binds pheophytin, quinone, additional chlorophylls, carotenoids and lipids. D1 provides most of the ligands for the Mn4-Ca-O5 cluster of the oxygen-evolving complex (OEC). There is also a Cl(-1) ion associated with D1 and D2, which is required for oxygen evolution. The PSII complex binds additional chlorophylls, carotenoids and specific lipids.. In terms of processing, tyr-161 forms a radical intermediate that is referred to as redox-active TyrZ, YZ or Y-Z. C-terminally processed by CTPA; processing is essential to allow assembly of the oxygen-evolving complex and thus photosynthetic growth.

The protein resides in the plastid. Its subcellular location is the chloroplast thylakoid membrane. The catalysed reaction is 2 a plastoquinone + 4 hnu + 2 H2O = 2 a plastoquinol + O2. Its function is as follows. Photosystem II (PSII) is a light-driven water:plastoquinone oxidoreductase that uses light energy to abstract electrons from H(2)O, generating O(2) and a proton gradient subsequently used for ATP formation. It consists of a core antenna complex that captures photons, and an electron transfer chain that converts photonic excitation into a charge separation. The D1/D2 (PsbA/PsbD) reaction center heterodimer binds P680, the primary electron donor of PSII as well as several subsequent electron acceptors. This Chara vulgaris (Common stonewort) protein is Photosystem II protein D1.